Here is a 658-residue protein sequence, read N- to C-terminus: Threonine--tRNA ligase (658 aa).

Positions 1 to 61 constitute a TGS domain; the sequence is MSDVRVIIQR…RDGESVEPVE (61 aa). The segment at 259–554 is catalytic; the sequence is DHRKLGNELD…LLEHYAGAFP (296 aa). The Zn(2+) site is built by cysteine 353, histidine 404, and histidine 531.

It belongs to the class-II aminoacyl-tRNA synthetase family. As to quaternary structure, homodimer. Zn(2+) serves as cofactor.

It is found in the cytoplasm. The catalysed reaction is tRNA(Thr) + L-threonine + ATP = L-threonyl-tRNA(Thr) + AMP + diphosphate + H(+). Catalyzes the attachment of threonine to tRNA(Thr) in a two-step reaction: L-threonine is first activated by ATP to form Thr-AMP and then transferred to the acceptor end of tRNA(Thr). Also edits incorrectly charged L-seryl-tRNA(Thr). In Streptomyces griseus subsp. griseus (strain JCM 4626 / CBS 651.72 / NBRC 13350 / KCC S-0626 / ISP 5235), this protein is Threonine--tRNA ligase.